A 482-amino-acid polypeptide reads, in one-letter code: Glutamyl-tRNA(Gln) amidotransferase subunit A (482 aa).

Catalysis depends on charge relay system residues lysine 75 and serine 150. Serine 174 serves as the catalytic Acyl-ester intermediate.

Belongs to the amidase family. GatA subfamily. As to quaternary structure, heterotrimer of A, B and C subunits.

It catalyses the reaction L-glutamyl-tRNA(Gln) + L-glutamine + ATP + H2O = L-glutaminyl-tRNA(Gln) + L-glutamate + ADP + phosphate + H(+). Functionally, allows the formation of correctly charged Gln-tRNA(Gln) through the transamidation of misacylated Glu-tRNA(Gln) in organisms which lack glutaminyl-tRNA synthetase. The reaction takes place in the presence of glutamine and ATP through an activated gamma-phospho-Glu-tRNA(Gln). This Deinococcus radiodurans (strain ATCC 13939 / DSM 20539 / JCM 16871 / CCUG 27074 / LMG 4051 / NBRC 15346 / NCIMB 9279 / VKM B-1422 / R1) protein is Glutamyl-tRNA(Gln) amidotransferase subunit A.